A 281-amino-acid chain; its full sequence is Leukocyte antigen CD37 (281 aa).

Over 1–17 (MSAQESCLSLIKYFLFV) the chain is Cytoplasmic. A helical transmembrane segment spans residues 18-38 (FNLFFFVLGSLIFCFGIWILI). Residues 39–59 (DKTSFVSFVGLAFVPLQIWSK) lie on the Extracellular side of the membrane. The helical transmembrane segment at 60 to 74 (VLAISGIFTMGIALL) threads the bilayer. The Cytoplasmic segment spans residues 75–85 (GCVGALKELRC). Residues 86–111 (LLGLYFGMLLLLFATQITLGILISTQ) form a helical membrane-spanning segment. The Extracellular portion of the chain corresponds to 112–241 (RAQLERSLRD…QGLQKWLHNN (130 aa)). Asparagine 170, asparagine 183, and asparagine 188 each carry an N-linked (GlcNAc...) asparagine glycan. A helical membrane pass occupies residues 242–266 (LISIVGICLGVGLLELGFMTLSIFL). At 267–281 (CRNLDHVYNRLARYR) the chain is on the cytoplasmic side.

This sequence belongs to the tetraspanin (TM4SF) family. In terms of assembly, interacts with SCIMP. Interacts with SOCS3. Interacts with DECTIN1/CLEC7A. Tyrosine phosphorylated; leading to activation of downstream signaling pathways. As to expression, B-lymphocytes. Antigen presenting cells.

The protein localises to the cell membrane. Structural component of specialized membrane microdomains known as tetraspanin-enriched microdomains (TERMs), which act as platforms for receptor clustering and signaling. Participates thereby in diverse biological functions such as cell signal transduction, adhesion, migration and protein trafficking. Upon ligand binding, two signaling pathways are activated, one acting through phosphorylation by LYN leading to cell death or a survival pathway with activation of GSK3B. Plays an essential role essential for clustering of integrin ITGA4/ITGB1 and promotes its mobility in the plasma membrane of B-cells. In turn, participates in ITGA4/ITGB1 integrin-mediated antiapoptotic signaling through AKT. Also plays a role in the migration of dendritic cells and neutrophils to draining lymph nodes, as well as in their integrin-mediated adhesion. Negatively regulates IL-6 responses through direct interaction with SOCS3 thereby preventing constitutive IL-6 signaling. Alternatively, inhibition of IL-6 signaling can also occur via interaction and stabilization of DECTIN1/CLEC7A at the cell membrane to inhibit its ability to promote the production of IL-6. This Homo sapiens (Human) protein is Leukocyte antigen CD37 (CD37).